The chain runs to 29 residues: Prolamin alpha-1 (29 aa).

This Dactylis glomerata (Orchard grass) protein is Prolamin alpha-1.